The chain runs to 65 residues: Large ribosomal subunit protein bL35 (65 aa).

The tract at residues 24-48 is disordered; the sequence is RRKAGKSHLLEHKSSDKKRSMSKTT. Positions 31–42 are enriched in basic and acidic residues; it reads HLLEHKSSDKKR.

This sequence belongs to the bacterial ribosomal protein bL35 family.

This Nostoc punctiforme (strain ATCC 29133 / PCC 73102) protein is Large ribosomal subunit protein bL35.